The sequence spans 127 residues: Pleckstrin homology-like domain family A member 3 (127 aa).

One can recognise a PH domain in the interval 5 to 108 (KVMNDGYLEK…RFKNRVAVQT (104 aa)).

It belongs to the PHLDA3 family.

It localises to the cytoplasm. The protein localises to the membrane. P53/tp53-regulated repressor of Akt/akt1 signaling. Represses akt1 by preventing akt1-binding to membrane lipids, thereby inhibiting akt1 translocation to the cellular membrane and activation. Contributes to p53/tp53-dependent apoptosis by repressing akt1 activity. Its direct transcription regulation by p53/tp53 may explain how p53/tp53 can negatively regulate akt1. May act as a tumor suppressor. The sequence is that of Pleckstrin homology-like domain family A member 3 (phlda3) from Danio rerio (Zebrafish).